Consider the following 325-residue polypeptide: Treponemal membrane protein B (325 aa).

The first 24 residues, 1-24 (MKTRNFSLVSALYVLLGVPLFVSA), serve as a signal peptide directing secretion. The stretch at 159–166 (EAARKAAE) is one EAARKAAE repeat. Residues 167–189 (ARKLEEQRIAAQKAQEERKRAEE) form an ARKLEEQRIAAQKAQEERKRAEE repeat. Residues 176 to 224 (AAQKAQEERKRAEEEAARKAAEARKLEEQRIAAQKAQEERKRAEEEAAR) form a disordered region. The EAARKAAE repeat unit spans residues 190 to 197 (EAARKAAE). An ARKLEEQRIAAQKAQEERKRAEE repeat occupies 198 to 220 (ARKLEEQRIAAQKAQEERKRAEE). One copy of the EAARKAAE repeat lies at 221–228 (EAARKAAE). The EAARKAEE repeat unit spans residues 229-236 (EAARKAEE).

This sequence to T.phagedenis TmpB.

It localises to the cell outer membrane. Tmp may serve as a porin or transport protein for large molecules. In Treponema pallidum (strain Nichols), this protein is Treponemal membrane protein B (tmpB).